The following is a 346-amino-acid chain: UPF0324 membrane protein FN0533 (346 aa).

A run of 10 helical transmembrane segments spans residues 5–22 (LYGIILCFLLALPAWKLG), 27–49 (LVGGPVFGIIIGIVIAILLKNRA), 62–81 (VLQYAVILLGFGLNLQTIIS), 86–108 (SLPIIVSTISTSLIIAYILAKLI), 115–137 (VILIGVGSSICGGSAIAATAPVI), 147–169 (AISVIFLFNVIAALIFPTLGDIL), 216–233 (LTRTLAIIPITLFLAVYN), 248–270 (IFPMFIVYFILASIITTVCNYFI), 283–305 (INNVFSFFKHLSKFFIIMAMVAI), and 315–337 (ILSGAKPLTLGFCCWFAISLVSI).

The protein belongs to the UPF0324 family.

The protein resides in the cell membrane. This is UPF0324 membrane protein FN0533 from Fusobacterium nucleatum subsp. nucleatum (strain ATCC 25586 / DSM 15643 / BCRC 10681 / CIP 101130 / JCM 8532 / KCTC 2640 / LMG 13131 / VPI 4355).